We begin with the raw amino-acid sequence, 877 residues long: Kinetochore null protein 2 (877 aa).

The SANTA domain occupies Ile20–Asp107. Disordered stretches follow at residues Arg122–Val315, Phe338–Asn535, and Met549–Ile604. Residues Gln153 to Ala211 are a coiled coil. Positions Ser156–Glu199 are enriched in basic and acidic residues. Residues Ile251–Ser279 show a composition bias toward polar residues. Basic and acidic residues-rich tracts occupy residues Glu359–Arg385, Arg394–Asp444, and Val453–Arg480. A coiled-coil region spans residues Glu491–Met549. Positions Gln511–Ser520 are enriched in low complexity. The segment covering Arg573–Pro583 has biased composition (polar residues). A compositionally biased stretch (basic and acidic residues) spans Ala592–Asn601. A Myb-like domain is found at Val617–Pro678. Disordered stretches follow at residues Arg757–Pro785 and Met808–Tyr877. Polar residues-rich tracts occupy residues Ser775 to Pro785 and Ser819 to Ser836. Positions Glu856 to Glu871 are enriched in acidic residues.

It belongs to the KNL2 family. As to quaternary structure, interacts with hcp-3.

It is found in the nucleus. The protein localises to the chromosome. Its subcellular location is the centromere. The protein resides in the kinetochore. Its function is as follows. Required for the recruitment of hcp-3, hcp-4, knl-1, bub-1 and lin-53 to kinetochores, kinetochore assembly, chromosome condensation and chromosome segregation in meiosis and mitosis. The polypeptide is Kinetochore null protein 2 (Caenorhabditis elegans).